A 238-amino-acid chain; its full sequence is tRNA (guanine-N(7)-)-methyltransferase (238 aa).

Glu70, Asp95, Asp122, and Asp145 together coordinate S-adenosyl-L-methionine. The active site involves Asp145. Substrate-binding positions include Lys149, Asp181, and 216 to 219 (TKFE).

The protein belongs to the class I-like SAM-binding methyltransferase superfamily. TrmB family.

The enzyme catalyses guanosine(46) in tRNA + S-adenosyl-L-methionine = N(7)-methylguanosine(46) in tRNA + S-adenosyl-L-homocysteine. Its pathway is tRNA modification; N(7)-methylguanine-tRNA biosynthesis. In terms of biological role, catalyzes the formation of N(7)-methylguanine at position 46 (m7G46) in tRNA. The protein is tRNA (guanine-N(7)-)-methyltransferase of Neisseria gonorrhoeae (strain ATCC 700825 / FA 1090).